We begin with the raw amino-acid sequence, 580 residues long: N(6)-adenosine-methyltransferase catalytic subunit METTL3 (580 aa).

Positions 1–70 are disordered; the sequence is MSDTWSSIQA…PKPSTTSVAP (70 aa). Ser-2 bears the N-acetylserine; alternate mark. Ser-2 is subject to Phosphoserine; alternate. The span at 28–37 shows a compositional bias: basic and acidic residues; that stretch reads QDSGHLDLRN. Ser-43, Ser-48, and Ser-50 each carry phosphoserine. Low complexity predominate over residues 55–67; sequence APTSSGPKPSTTS. Residues Lys-177, Lys-211, Lys-212, and Lys-215 each participate in a glycyl lysine isopeptide (Lys-Gly) (interchain with G-Cter in SUMO1) cross-link. The segment at 198 to 217 is disordered; sequence LASSASEPAKEPAKKSRKHA. Residues 210–215 carry the Nuclear localization signal motif; that stretch reads AKKSRK. Phosphoserine occurs at positions 219, 243, and 350. S-adenosyl-L-methionine-binding positions include 377–378 and Asp-395; that span reads DI. The segment at 396–410 is gate loop 1; it reads PPWDIHMELPYGTLT. Interaction with METTL14 regions lie at residues 450-454 and 464-480; these read ERVDE and QRII…NHGK. An interphase loop region spans residues 462 to 479; the sequence is QLQRIIRTGRTGHWLNHG. A positively charged region required for RNA-binding region spans residues 465–478; the sequence is RIIRTGRTGHWLNH. A gate loop 2 region spans residues 507–515; it reads VRSTSHKPD. S-adenosyl-L-methionine-binding positions include Lys-513, 536-539, and 549-550; these read RPHN and NQ.

This sequence belongs to the MT-A70-like family. In terms of assembly, heterodimer; heterodimerizes with METTL14 to form an antiparallel heterodimer that constitutes an active methyltransferase. Component of the WMM complex, a N6-methyltransferase complex composed of a catalytic subcomplex, named MAC, and of an associated subcomplex, named MACOM. The MAC subcomplex is composed of METTL3 and METTL14. The MACOM subcomplex is composed of WTAP, ZC3H13, CBLL1/HAKAI, VIRMA, and, in some cases of RBM15 (RBM15 or RBM15B). Interacts with NCBP1/CBP80. Interacts with EIF4E. Interacts with EIF3B. In terms of processing, sumoylation inhibits the N6-adenosine-methyltransferase activity. Sumoylation does not affect subcellular location or interaction with METTL14. Desumoylated by SENP1. In terms of tissue distribution, present in both germ cells and somatic cells during testis development (at protein level).

The protein resides in the nucleus. It is found in the nucleus speckle. It localises to the cytoplasm. The enzyme catalyses an adenosine in mRNA + S-adenosyl-L-methionine = an N(6)-methyladenosine in mRNA + S-adenosyl-L-homocysteine + H(+). Methyltransferase activity is regulated by miRNAs via a sequence pairing mechanism. Methyltransferase activity is inhibited by sumoylation. Its function is as follows. The METTL3-METTL14 heterodimer forms a N6-methyltransferase complex that methylates adenosine residues at the N(6) position of some RNAs and regulates various processes such as the circadian clock, differentiation of embryonic and hematopoietic stem cells, cortical neurogenesis, response to DNA damage, differentiation of T-cells and primary miRNA processing. In the heterodimer formed with METTL14, METTL3 constitutes the catalytic core. N6-methyladenosine (m6A), which takes place at the 5'-[AG]GAC-3' consensus sites of some mRNAs, plays a role in mRNA stability, processing, translation efficiency and editing. M6A acts as a key regulator of mRNA stability: methylation is completed upon the release of mRNA into the nucleoplasm and promotes mRNA destabilization and degradation. In embryonic stem cells (ESCs), m6A methylation of mRNAs encoding key naive pluripotency-promoting transcripts results in transcript destabilization, promoting differentiation of ESCs. M6A regulates the length of the circadian clock: acts as an early pace-setter in the circadian loop by putting mRNA production on a fast-track for facilitating nuclear processing, thereby providing an early point of control in setting the dynamics of the feedback loop. M6A also regulates circadian regulation of hepatic lipid metabolism. M6A regulates spermatogonial differentiation and meiosis and is essential for male fertility and spermatogenesis. Also required for oogenesis. Involved in the response to DNA damage: in response to ultraviolet irradiation, METTL3 rapidly catalyzes the formation of m6A on poly(A) transcripts at DNA damage sites, leading to the recruitment of POLK to DNA damage sites. M6A is also required for T-cell homeostasis and differentiation: m6A methylation of transcripts of SOCS family members (SOCS1, SOCS3 and CISH) in naive T-cells promotes mRNA destabilization and degradation, promoting T-cell differentiation. Inhibits the type I interferon response by mediating m6A methylation of IFNB. M6A also regulates cortical neurogenesis: m6A methylation of transcripts related to transcription factors, neural stem cells, the cell cycle and neuronal differentiation during brain development promotes their destabilization and decay, promoting differentiation of radial glial cells. M6A also takes place in other RNA molecules, such as primary miRNA (pri-miRNAs). Mediates m6A methylation of Xist RNA, thereby participating in random X inactivation: m6A methylation of Xist leads to target YTHDC1 reader on Xist and promote transcription repression activity of Xist. METTL3 mediates methylation of pri-miRNAs, marking them for recognition and processing by DGCR8. Acts as a positive regulator of mRNA translation independently of the methyltransferase activity: promotes translation by interacting with the translation initiation machinery in the cytoplasm. In Mus musculus (Mouse), this protein is N(6)-adenosine-methyltransferase catalytic subunit METTL3.